We begin with the raw amino-acid sequence, 371 residues long: MSITTLAVPGVRGLTPYQPGKPIGELEREFALKRIVKLASNENPLGASPKVLEVVRRILGGTHLYPDGSGFELKAALAEKLGVEPAQIVLGNGSNDVLDLVARAFLTAGRNAVYSEYAFAVYPIATQTAGATGKTAPAHDGSRGPRFGHDLETMLERVDPDTRVVFIANPNNPTGTLLGRGELYSFLAALPEHVIAVVDEAYFEYARRPDHPDALEWLGEFPGLIVTRTFSKAYGLAGLRVGYAVTGVEIADLLNRARQPFNVNTLGLAAAAAALEDTGFLEATVQANDAGRSQLEAGFRERGFDFIPSAGNFVSFDLGRPATPVFDALLREGVIVRPLGNYGLPNHLRVSVGTAEEIDLFFAALDRVLVP.

Residue lysine 232 is modified to N6-(pyridoxal phosphate)lysine.

It belongs to the class-II pyridoxal-phosphate-dependent aminotransferase family. Histidinol-phosphate aminotransferase subfamily. Homodimer. The cofactor is pyridoxal 5'-phosphate.

The catalysed reaction is L-histidinol phosphate + 2-oxoglutarate = 3-(imidazol-4-yl)-2-oxopropyl phosphate + L-glutamate. It functions in the pathway amino-acid biosynthesis; L-histidine biosynthesis; L-histidine from 5-phospho-alpha-D-ribose 1-diphosphate: step 7/9. The chain is Histidinol-phosphate aminotransferase 2 from Methylococcus capsulatus (strain ATCC 33009 / NCIMB 11132 / Bath).